The sequence spans 475 residues: UDP-glycosyltransferase 101 (475 aa).

Residue His-15 is the Proton acceptor of the active site. His-15 lines the an anthocyanidin pocket. Residue Asp-117 is the Charge relay of the active site. Residues Ala-345, Gln-347, His-362, Trp-365, Asn-366, Ser-367, and Glu-370 each contribute to the UDP-alpha-D-glucose site. Gly-385 contacts an anthocyanidin. 2 residues coordinate UDP-alpha-D-glucose: Glu-386 and Gln-387.

The protein belongs to the UDP-glycosyltransferase family.

The catalysed reaction is (20S)-protopanaxadiol + UDP-alpha-D-glucose = (20S)-ginsenoside C-K + UDP + H(+). It catalyses the reaction (20S)-ginsenoside Rg3 + UDP-alpha-D-glucose = (20S)-ginsenoside Rd + UDP + H(+). The enzyme catalyses (20S)-protopanaxatriol + UDP-alpha-D-glucose = (20S)-ginsenoside F1 + UDP + H(+). It carries out the reaction (20S)-ginsenoside F1 + UDP-alpha-D-glucose = (20S)-ginsenoside Rg1 + UDP + H(+). It participates in secondary metabolite biosynthesis; terpenoid biosynthesis. In terms of biological role, component of the dammarane-type triterpene saponins (e.g. ginsenosides or panaxosides) biosynthetic pathway. Glycosyltransferase that catalyzes the biosynthesis of ginsenoside F1 from protopanaxatriol (PPT) and the conversion of ginsenoside F1 to ginsenoside Rg1. Triggers C20-OH glycosylation of ginsenoside Rg3 to produce ginsenoside Rd. Mediates the conversion of protopanaxadiol (PPD) to the ginsenoside compound K. The chain is UDP-glycosyltransferase 101 from Panax ginseng (Korean ginseng).